Reading from the N-terminus, the 557-residue chain is Formate--tetrahydrofolate ligase (557 aa).

67–74 contributes to the ATP binding site; sequence TPAGEGKT.

It belongs to the formate--tetrahydrofolate ligase family.

It catalyses the reaction (6S)-5,6,7,8-tetrahydrofolate + formate + ATP = (6R)-10-formyltetrahydrofolate + ADP + phosphate. It functions in the pathway one-carbon metabolism; tetrahydrofolate interconversion. This is Formate--tetrahydrofolate ligase from Cereibacter sphaeroides (strain ATCC 17025 / ATH 2.4.3) (Rhodobacter sphaeroides).